Consider the following 430-residue polypeptide: Lipoyl synthase, mitochondrial (430 aa).

Residues 1 to 37 (MATSAGKLRTLYSAHSSLSSLPPSARPTLQLATLRSY) constitute a mitochondrion transit peptide. A compositionally biased stretch (polar residues) spans 39 to 55 (TTTPHDSPIGNTSNTPP). The segment at 39–58 (TTTPHDSPIGNTSNTPPTVK) is disordered. Residues Cys-141, Cys-146, Cys-152, Cys-172, Cys-176, Cys-179, and Ser-387 each contribute to the [4Fe-4S] cluster site. Residues 155-376 (GSSKSAATAT…KERALEMGFL (222 aa)) enclose the Radical SAM core domain.

Belongs to the radical SAM superfamily. Lipoyl synthase family. Requires [4Fe-4S] cluster as cofactor.

The protein resides in the mitochondrion. The enzyme catalyses [[Fe-S] cluster scaffold protein carrying a second [4Fe-4S](2+) cluster] + N(6)-octanoyl-L-lysyl-[protein] + 2 oxidized [2Fe-2S]-[ferredoxin] + 2 S-adenosyl-L-methionine + 4 H(+) = [[Fe-S] cluster scaffold protein] + N(6)-[(R)-dihydrolipoyl]-L-lysyl-[protein] + 4 Fe(3+) + 2 hydrogen sulfide + 2 5'-deoxyadenosine + 2 L-methionine + 2 reduced [2Fe-2S]-[ferredoxin]. It participates in protein modification; protein lipoylation via endogenous pathway; protein N(6)-(lipoyl)lysine from octanoyl-[acyl-carrier-protein]: step 2/2. In terms of biological role, catalyzes the radical-mediated insertion of two sulfur atoms into the C-6 and C-8 positions of the octanoyl moiety bound to the lipoyl domains of lipoate-dependent enzymes, thereby converting the octanoylated domains into lipoylated derivatives. The sequence is that of Lipoyl synthase, mitochondrial from Ajellomyces capsulatus (strain G186AR / H82 / ATCC MYA-2454 / RMSCC 2432) (Darling's disease fungus).